A 361-amino-acid chain; its full sequence is S-adenosylmethionine:tRNA ribosyltransferase-isomerase (361 aa).

The protein belongs to the QueA family. Monomer.

It localises to the cytoplasm. The catalysed reaction is 7-aminomethyl-7-carbaguanosine(34) in tRNA + S-adenosyl-L-methionine = epoxyqueuosine(34) in tRNA + adenine + L-methionine + 2 H(+). The protein operates within tRNA modification; tRNA-queuosine biosynthesis. Functionally, transfers and isomerizes the ribose moiety from AdoMet to the 7-aminomethyl group of 7-deazaguanine (preQ1-tRNA) to give epoxyqueuosine (oQ-tRNA). The polypeptide is S-adenosylmethionine:tRNA ribosyltransferase-isomerase (Mesorhizobium japonicum (strain LMG 29417 / CECT 9101 / MAFF 303099) (Mesorhizobium loti (strain MAFF 303099))).